Reading from the N-terminus, the 217-residue chain is Chorionic somatomammotropin hormone 2 (217 aa).

A signal peptide spans 1–26; the sequence is MAAGSRTSLLLAFALLCLPWLQEAGA. His44 contacts Zn(2+). Cys79 and Cys191 are joined by a disulfide. Zn(2+) is bound at residue Glu200. Cys208 and Cys215 are oxidised to a cystine.

The protein belongs to the somatotropin/prolactin family. As to quaternary structure, can be found in a monomeric as well as dimeric form.

The protein localises to the secreted. In terms of biological role, produced only during pregnancy and is involved in stimulating lactation, fetal growth and metabolism. Does not interact with GHR but only activates PRLR through zinc-induced dimerization. This is Chorionic somatomammotropin hormone 2 (CSH2) from Homo sapiens (Human).